The following is a 216-amino-acid chain: Probable GTP-binding protein EngB (216 aa).

The EngB-type G domain occupies 37–214 (QGLEVAFAGR…RAAIIKLVAE (178 aa)). GTP contacts are provided by residues 45–52 (GRSNVGKS), 72–76 (GRTQE), 92–95 (DMPG), 159–162 (TKAD), and 193–195 (TSS). Residues Ser-52 and Thr-74 each coordinate Mg(2+).

Belongs to the TRAFAC class TrmE-Era-EngA-EngB-Septin-like GTPase superfamily. EngB GTPase family. It depends on Mg(2+) as a cofactor.

In terms of biological role, necessary for normal cell division and for the maintenance of normal septation. This chain is Probable GTP-binding protein EngB, found in Rhodopseudomonas palustris (strain BisA53).